We begin with the raw amino-acid sequence, 702 residues long: Methionine--tRNA ligase (702 aa).

Residues 23–33 (PYANGPLHLGH) carry the 'HIGH' region motif. Zn(2+) is bound by residues Cys154, Cys157, Cys167, and Cys170. The short motif at 341–345 (KMSKS) is the 'KMSKS' region element. Position 344 (Lys344) interacts with ATP. The tract at residues 562–593 (LAPPPASAKQQNASMSNTAPPPTAEEPETTAP) is disordered. The span at 569–578 (AKQQNASMSN) shows a compositional bias: polar residues. The region spanning 599–702 (DFAKLDLRIG…SSAQPGMPVR (104 aa)) is the tRNA-binding domain.

It belongs to the class-I aminoacyl-tRNA synthetase family. MetG type 1 subfamily. As to quaternary structure, homodimer. It depends on Zn(2+) as a cofactor.

The protein resides in the cytoplasm. It catalyses the reaction tRNA(Met) + L-methionine + ATP = L-methionyl-tRNA(Met) + AMP + diphosphate. Functionally, is required not only for elongation of protein synthesis but also for the initiation of all mRNA translation through initiator tRNA(fMet) aminoacylation. The chain is Methionine--tRNA ligase from Xylella fastidiosa (strain M23).